A 280-amino-acid chain; its full sequence is ATP synthase subunit a (280 aa).

7 helical membrane-spanning segments follow: residues 45–65, 105–125, 126–146, 159–179, 190–210, 223–243, and 250–270; these read AINV…LFLF, LVAP…LMDL, LPVD…LKVV, LSIF…GGFF, FLFP…PISL, MIFI…LFGG, and AVFH…LTIV.

Belongs to the ATPase A chain family. F-type ATPases have 2 components, CF(1) - the catalytic core - and CF(0) - the membrane proton channel. CF(1) has five subunits: alpha(3), beta(3), gamma(1), delta(1), epsilon(1). CF(0) has three main subunits: a(1), b(2) and c(9-12). The alpha and beta chains form an alternating ring which encloses part of the gamma chain. CF(1) is attached to CF(0) by a central stalk formed by the gamma and epsilon chains, while a peripheral stalk is formed by the delta and b chains.

The protein resides in the cell inner membrane. Functionally, key component of the proton channel; it plays a direct role in the translocation of protons across the membrane. The protein is ATP synthase subunit a of Thiobacillus denitrificans (strain ATCC 25259 / T1).